We begin with the raw amino-acid sequence, 545 residues long: CTP synthase (545 aa).

Residues 1-266 are amidoligase domain; it reads MTTRYIFVTG…DELVVKRFGI (266 aa). Ser-14 serves as a coordination point for CTP. Ser-14 is a binding site for UTP. ATP is bound by residues 15–20 and Asp-72; that span reads SLGKGI. The Mg(2+) site is built by Asp-72 and Glu-140. CTP is bound by residues 147–149, 187–192, and Lys-223; these read DIE and KTKPTQ. UTP-binding positions include 187-192 and Lys-223; that span reads KTKPTQ. 239 to 241 contributes to the ATP binding site; it reads KDV. Residues 291–542 enclose the Glutamine amidotransferase type-1 domain; it reads TIGMVGKYIE…VAAATAYQKR (252 aa). Gly-352 is an L-glutamine binding site. The active-site Nucleophile; for glutamine hydrolysis is Cys-379. L-glutamine contacts are provided by residues 380–383, Glu-403, and Arg-470; that span reads LGLQ. Residues His-515 and Glu-517 contribute to the active site.

Belongs to the CTP synthase family. In terms of assembly, homotetramer.

The catalysed reaction is UTP + L-glutamine + ATP + H2O = CTP + L-glutamate + ADP + phosphate + 2 H(+). It catalyses the reaction L-glutamine + H2O = L-glutamate + NH4(+). It carries out the reaction UTP + NH4(+) + ATP = CTP + ADP + phosphate + 2 H(+). The protein operates within pyrimidine metabolism; CTP biosynthesis via de novo pathway; CTP from UDP: step 2/2. With respect to regulation, allosterically activated by GTP, when glutamine is the substrate; GTP has no effect on the reaction when ammonia is the substrate. The allosteric effector GTP functions by stabilizing the protein conformation that binds the tetrahedral intermediate(s) formed during glutamine hydrolysis. Inhibited by the product CTP, via allosteric rather than competitive inhibition. In terms of biological role, catalyzes the ATP-dependent amination of UTP to CTP with either L-glutamine or ammonia as the source of nitrogen. Regulates intracellular CTP levels through interactions with the four ribonucleotide triphosphates. The protein is CTP synthase of Shewanella sediminis (strain HAW-EB3).